Consider the following 638-residue polypeptide: Chaperone protein DnaK (638 aa).

The residue at position 199 (T199) is a Phosphothreonine; by autocatalysis. The tract at residues 600–638 is disordered; that stretch reads EINQKKSEENLKKEDTSSESKKDENVVDAEFEEIKDPKK. Positions 602–624 are enriched in basic and acidic residues; sequence NQKKSEENLKKEDTSSESKKDEN.

This sequence belongs to the heat shock protein 70 family.

Functionally, acts as a chaperone. This is Chaperone protein DnaK from Buchnera aphidicola subsp. Schizaphis graminum (strain Sg).